A 312-amino-acid polypeptide reads, in one-letter code: Glyoxylate/hydroxypyruvate reductase A (312 aa).

Arg227 is an active-site residue. His275 functions as the Proton donor in the catalytic mechanism.

Belongs to the D-isomer specific 2-hydroxyacid dehydrogenase family. GhrA subfamily.

Its subcellular location is the cytoplasm. It catalyses the reaction glycolate + NADP(+) = glyoxylate + NADPH + H(+). The catalysed reaction is (R)-glycerate + NAD(+) = 3-hydroxypyruvate + NADH + H(+). The enzyme catalyses (R)-glycerate + NADP(+) = 3-hydroxypyruvate + NADPH + H(+). Its function is as follows. Catalyzes the NADPH-dependent reduction of glyoxylate and hydroxypyruvate into glycolate and glycerate, respectively. This chain is Glyoxylate/hydroxypyruvate reductase A, found in Salmonella typhi.